A 353-amino-acid chain; its full sequence is Photosystem II protein D1 (353 aa).

Thr2 carries the N-acetylthreonine modification. Thr2 is modified (phosphothreonine). Helical transmembrane passes span 29–46, 118–133, and 142–156; these read YIGWFGVLMIPTLLTATS, HFLLGVACYMGREWEL, and WIAVAYSAPVAAATA. A chlorophyll a-binding site is contributed by His118. Tyr126 serves as a coordination point for pheophytin a. Residues Asp170 and Glu189 each coordinate [CaMn4O5] cluster. Residues 197–218 form a helical membrane-spanning segment; it reads FHMLGVAGVFGGSLFSAMHGSL. Chlorophyll a is bound at residue His198. A quinone contacts are provided by residues His215 and 264-265; that span reads SF. Fe cation is bound at residue His215. His272 contacts Fe cation. A helical transmembrane segment spans residues 274–288; that stretch reads FLAAWPVVGIWFTAL. His332, Glu333, Asp342, and Ala344 together coordinate [CaMn4O5] cluster. Residues 345 to 353 constitute a propeptide that is removed on maturation; it reads ALEVPYLNG.

Belongs to the reaction center PufL/M/PsbA/D family. PSII is composed of 1 copy each of membrane proteins PsbA, PsbB, PsbC, PsbD, PsbE, PsbF, PsbH, PsbI, PsbJ, PsbK, PsbL, PsbM, PsbT, PsbX, PsbY, PsbZ, Psb30/Ycf12, at least 3 peripheral proteins of the oxygen-evolving complex and a large number of cofactors. It forms dimeric complexes. Requires The D1/D2 heterodimer binds P680, chlorophylls that are the primary electron donor of PSII, and subsequent electron acceptors. It shares a non-heme iron and each subunit binds pheophytin, quinone, additional chlorophylls, carotenoids and lipids. D1 provides most of the ligands for the Mn4-Ca-O5 cluster of the oxygen-evolving complex (OEC). There is also a Cl(-1) ion associated with D1 and D2, which is required for oxygen evolution. The PSII complex binds additional chlorophylls, carotenoids and specific lipids. as cofactor. Phosphorylated in both bundle sheath and mesophyll cells, phosphorylation increases when cells are grown under high rather than low light regimes (70 vs 900 umol photons/m-2/s). Post-translationally, PSII is subject to light-induced damage, in particular to D1. Damaged protein is degraded by Deg1 and FtsH proteases and replaced. In maize mesophyll cells D1 degradation is less extensive in grana (stacked) vs stroma (unstacked) lamellae, in part due to exclusion of FtsH from the grana. D1 degradation is faster in bundle sheath cells. In terms of processing, tyr-161 forms a radical intermediate that is referred to as redox-active TyrZ, YZ or Y-Z. C-terminally processed by CTPA; processing is essential to allow assembly of the oxygen-evolving complex and thus photosynthetic growth.

The protein resides in the plastid. It localises to the chloroplast thylakoid membrane. The catalysed reaction is 2 a plastoquinone + 4 hnu + 2 H2O = 2 a plastoquinol + O2. Its function is as follows. Photosystem II (PSII) is a light-driven water:plastoquinone oxidoreductase that uses light energy to abstract electrons from H(2)O, generating O(2) and a proton gradient subsequently used for ATP formation. It consists of a core antenna complex that captures photons, and an electron transfer chain that converts photonic excitation into a charge separation. The D1/D2 (PsbA/PsbD) reaction center heterodimer binds P680, the primary electron donor of PSII as well as several subsequent electron acceptors. In Zea mays (Maize), this protein is Photosystem II protein D1.